The primary structure comprises 403 residues: MAAVGSPGSLESAPRIMRLVAECSRSGARAGELRLPHGTVATPVFMPVGTQATMKGITTEQLDSLGCRICLGNTYHLGLRPGPELIRKAQGLHGFMNWPHNLLTDSGGFQMVSLFSLSEVTEEGVHFRSPYDGEETLLSPERSVEIQNALGSDIIMQLDHVVSSTVTGPLVEEAMHRSVRWLDRCIAAHKHPDKQNLFAIIQGGLNADLRTTCLKEMTKRDVPGFAIGGLSGGESKAQFWKMVALSTSMLPKDKPRYLMGVGYATDLVVCVALGCDMFDCVYPTRTARFGSALVPTGNLQLKKKQYAKDFSPINPECPCPTCQTHSRAFLHALLHSDNTTALHHLTVHNIAYQLQLLSAVRSSILEQRFPDFVRNFMRTMYGDHSLCPAWAVEALASVGIMLT.

The residue at position 2 (Ala-2) is an N-acetylalanine. The active-site Proton acceptor is the Asp-105. Position 105 to 109 (105 to 109 (DSGGF)) interacts with queuine. At Ser-139 the chain carries Phosphoserine. 3 residues coordinate queuine: Asp-159, Gln-202, and Gly-229. Positions 260–266 (GVGYATD) are RNA binding. Asp-279 acts as the Nucleophile in catalysis. The tract at residues 284–288 (TRTAR) is RNA binding; important for wobble base 34 recognition. Residues Cys-317, Cys-319, Cys-322, and His-348 each coordinate Zn(2+).

It belongs to the queuine tRNA-ribosyltransferase family. In terms of assembly, heterodimer of a catalytic subunit QTRT1 and an accessory subunit QTRT2. Zn(2+) serves as cofactor. In terms of tissue distribution, expressed in brain, heart, kidney, liver, ling, skeletal muscle, spleen and testis.

The protein localises to the cytoplasm. The protein resides in the mitochondrion outer membrane. It is found in the nucleus. It carries out the reaction guanosine(34) in tRNA + queuine = queuosine(34) in tRNA + guanine. Catalytic subunit of the queuine tRNA-ribosyltransferase (TGT) that catalyzes the base-exchange of a guanine (G) residue with queuine (Q) at position 34 (anticodon wobble position) in tRNAs with GU(N) anticodons (tRNA-Asp, -Asn, -His and -Tyr), resulting in the hypermodified nucleoside queuosine (7-(((4,5-cis-dihydroxy-2-cyclopenten-1-yl)amino)methyl)-7-deazaguanosine). Catalysis occurs through a double-displacement mechanism. The nucleophile active site attacks the C1' of nucleotide 34 to detach the guanine base from the RNA, forming a covalent enzyme-RNA intermediate. The proton acceptor active site deprotonates the incoming queuine, allowing a nucleophilic attack on the C1' of the ribose to form the product. Modification of cytoplasmic tRNAs with queuosine controls the elongation speed of cognate codons, thereby ensuring the correct folding of nascent proteins to maintain proteome integrity. This Mus musculus (Mouse) protein is Queuine tRNA-ribosyltransferase catalytic subunit 1.